Here is a 297-residue protein sequence, read N- to C-terminus: MGLPVHNQPHKAHSGSPASTFSAALVSSAISNVIGYPLDSIKVRQQTYNFPTIRSCFQNAVKNEGLKGLYRGLTLPLISATLSRSVSFTVYDSLKLTFAHVDPTLRYFISGLGTGTFISLFACPFEYSKLYSQIDMLLRKTNMGRRQETNSKLSVRPPLSSFQSASDIVRRYGFTALWNGYRYHLTRDALGSACYFTIYETFKKNLIANDVKPHFAYAFSGAFCGALSWILVFPVDTAKSIVQRNTLLSIKTPLSSIPWLSFTIYRGIGISLMRSALINSCNFTLFELFRETKVLSK.

Solcar repeat units lie at residues 15 to 97, 102 to 205, and 212 to 292; these read GSPA…LKLT, DPTL…FKKN, and KPHF…FRET. Transmembrane regions (helical) follow at residues 18–38, 72–91, 107–127, 184–204, 215–235, and 264–285; these read ASTF…GYPL, GLTL…FTVY, YFIS…PFEY, HLTR…TFKK, FAYA…VFPV, and IYRG…NFTL.

It belongs to the mitochondrial carrier (TC 2.A.29) family.

The protein resides in the mitochondrion inner membrane. Functionally, required for arginine biosynthesis. Transports ornithine synthesized from glutamate in the mitochondrial matrix to the cytosol, where it is converted to arginine. The protein is Mitochondrial ornithine transporter 1 of Schizosaccharomyces pombe (strain 972 / ATCC 24843) (Fission yeast).